Here is a 572-residue protein sequence, read N- to C-terminus: MKTSSLLLATTRETPADAVVISHQLMLRAGIIRPLAGGLYNWLPLGVRVLRKVEAIIRDEMNKAQAQELLMPVVQPMELWEESGRAEAYGPELLRFKDRHQREFALGPTHEEIITDLVRKEIRSYKQLPANFYQIQTKFRDEIRPRFGVMRSREFIMKDAYSFHMDKDSLQKTYEDMYDTYNRIFTRLGLDFRPVQADTGSIGGEGSHEFHVLADSGEDDIAFSSDSDYAANIELAEALAPRGERAAATEELTKVETPNKHSIEDVCDFLQLKKKKVAKTLVVKGATEEHPVVALVIRGDHDLNEIKAEKLDLVAEPFEMATDEEIQNAVGCKAGSIGPVNLSIPVIVDRTAAHMADFVCGANEDGFHFTGANWDRDATPTLVADIRNVVKGDPSPCGKGKIEIRRGIEVGHIFQLGNKYSEALNATVLNENSRAQILEMGCYGIGVTRVVAAAIEQNYDDKGIIWPEAIAPFQVCIVPMQMHKSPRVEEAVMTLYNELTAKGIEVLLDDRKERPGVMFNDMELIGIPHRIVIGERGLDKGEIEYKHRRDEKSQDIPEAEFMEFLLGKLSGN.

It belongs to the class-II aminoacyl-tRNA synthetase family. ProS type 1 subfamily. Homodimer.

Its subcellular location is the cytoplasm. It carries out the reaction tRNA(Pro) + L-proline + ATP = L-prolyl-tRNA(Pro) + AMP + diphosphate. Its function is as follows. Catalyzes the attachment of proline to tRNA(Pro) in a two-step reaction: proline is first activated by ATP to form Pro-AMP and then transferred to the acceptor end of tRNA(Pro). As ProRS can inadvertently accommodate and process non-cognate amino acids such as alanine and cysteine, to avoid such errors it has two additional distinct editing activities against alanine. One activity is designated as 'pretransfer' editing and involves the tRNA(Pro)-independent hydrolysis of activated Ala-AMP. The other activity is designated 'posttransfer' editing and involves deacylation of mischarged Ala-tRNA(Pro). The misacylated Cys-tRNA(Pro) is not edited by ProRS. The protein is Proline--tRNA ligase of Hydrogenovibrio crunogenus (strain DSM 25203 / XCL-2) (Thiomicrospira crunogena).